A 140-amino-acid polypeptide reads, in one-letter code: Lysozyme D (140 aa).

The first 18 residues, 1-18, serve as a signal peptide directing secretion; that stretch reads MKAFIVLVALACAAPAFG. Residues 19–140 form the C-type lysozyme domain; sequence RTMDRCSLAR…GWLPSIDDCF (122 aa). 4 cysteine pairs are disulfide-bonded: cysteine 24–cysteine 139, cysteine 45–cysteine 129, cysteine 80–cysteine 96, and cysteine 92–cysteine 110. Residues glutamate 50 and aspartate 68 contribute to the active site.

The protein belongs to the glycosyl hydrolase 22 family. Found in the midgut.

It carries out the reaction Hydrolysis of (1-&gt;4)-beta-linkages between N-acetylmuramic acid and N-acetyl-D-glucosamine residues in a peptidoglycan and between N-acetyl-D-glucosamine residues in chitodextrins.. Functionally, unlikely to play an active role in the humoral immune defense. May have a function in the digestion of bacteria in the food. This chain is Lysozyme D (LysD), found in Drosophila melanogaster (Fruit fly).